The chain runs to 310 residues: Olfactory receptor 2A7 (310 aa).

Topologically, residues 1 to 24 (MGDNITSITEFLLLGFPVGPRIQM) are extracellular. Asn-4 carries an N-linked (GlcNAc...) asparagine glycan. A helical transmembrane segment spans residues 25 to 48 (LLFGLFSLFYVFTLLGNGTILGLI). The Cytoplasmic portion of the chain corresponds to 49 to 56 (SLDSRLHA). A helical transmembrane segment spans residues 57 to 78 (PMYFFLSHLAVVDIAYACNTVP). At 79–99 (RMLVNLLHPAKPISFAGRMMQ) the chain is on the extracellular side. The chain crosses the membrane as a helical span at residues 100-119 (TFLFSTFAVTECLLLVVMSY). The Cytoplasmic portion of the chain corresponds to 120 to 138 (DLYVAICHPLRYLAIMTWR). The helical transmembrane segment at 139-157 (VCITLAVTSWTTGVLLSLI) threads the bilayer. The Extracellular segment spans residues 158 to 194 (HLVLLLPLPFCRPQKIYHFFCEILAVLKLACADTHIN). Residues 195–218 (ENMVLAGAISGLVGPLSTIVVSYM) form a helical membrane-spanning segment. Over 219–235 (CILCAILQIQSREVQRK) the chain is Cytoplasmic. Residues 236-258 (AFCTCFSHLCVIGLFYGTAIIMY) traverse the membrane as a helical segment. At 259–271 (VGPRYGNPKEQKK) the chain is on the extracellular side. A helical transmembrane segment spans residues 272–291 (YLLLFHSLFNPMLNPLICSL). The Cytoplasmic portion of the chain corresponds to 292–310 (RNSEVKNTLKRVLGVERAL).

The protein belongs to the G-protein coupled receptor 1 family.

The protein localises to the cell membrane. Functionally, odorant receptor. The sequence is that of Olfactory receptor 2A7 (OR2A7) from Homo sapiens (Human).